We begin with the raw amino-acid sequence, 215 residues long: Adenylate kinase (215 aa).

10–15 (GAGKGT) contributes to the ATP binding site. The interval 30 to 59 (STGDMLRAAIKAQTPMGKMAKEFMDAGKLV) is NMP. AMP-binding positions include Thr-31, Arg-36, 57–59 (KLV), 85–88 (GFPR), and Gln-92. The interval 122 to 159 (GRRVHPASGRTYHITYNPPKVDDKDNETGDDLIQREDD) is LID. Residues Arg-123 and 132 to 133 (TY) each bind ATP. Positions 156 and 167 each coordinate AMP. Gln-201 is a binding site for ATP.

It belongs to the adenylate kinase family. As to quaternary structure, monomer.

It localises to the cytoplasm. It catalyses the reaction AMP + ATP = 2 ADP. It functions in the pathway purine metabolism; AMP biosynthesis via salvage pathway; AMP from ADP: step 1/1. In terms of biological role, catalyzes the reversible transfer of the terminal phosphate group between ATP and AMP. Plays an important role in cellular energy homeostasis and in adenine nucleotide metabolism. This chain is Adenylate kinase, found in Hydrogenovibrio crunogenus (strain DSM 25203 / XCL-2) (Thiomicrospira crunogena).